The following is a 636-amino-acid chain: tRNA 5-methylaminomethyl-2-thiouridine biosynthesis bifunctional protein MnmC (636 aa).

The segment at 1 to 202 (MTVSKILKQV…ERAALRAQSH (202 aa)) is tRNA (mnm(5)s(2)U34)-methyltransferase. Positions 227–636 (IGGGVASACL…GKALEMSGKS (410 aa)) are FAD-dependent cmnm(5)s(2)U34 oxidoreductase.

The protein in the N-terminal section; belongs to the methyltransferase superfamily. tRNA (mnm(5)s(2)U34)-methyltransferase family. It in the C-terminal section; belongs to the DAO family. FAD serves as cofactor.

It is found in the cytoplasm. The enzyme catalyses 5-aminomethyl-2-thiouridine(34) in tRNA + S-adenosyl-L-methionine = 5-methylaminomethyl-2-thiouridine(34) in tRNA + S-adenosyl-L-homocysteine + H(+). Its function is as follows. Catalyzes the last two steps in the biosynthesis of 5-methylaminomethyl-2-thiouridine (mnm(5)s(2)U) at the wobble position (U34) in tRNA. Catalyzes the FAD-dependent demodification of cmnm(5)s(2)U34 to nm(5)s(2)U34, followed by the transfer of a methyl group from S-adenosyl-L-methionine to nm(5)s(2)U34, to form mnm(5)s(2)U34. This Shewanella halifaxensis (strain HAW-EB4) protein is tRNA 5-methylaminomethyl-2-thiouridine biosynthesis bifunctional protein MnmC.